The primary structure comprises 194 residues: Fe/S biogenesis protein NfuA (194 aa).

[4Fe-4S] cluster is bound by residues cysteine 152 and cysteine 155.

Belongs to the NfuA family. As to quaternary structure, homodimer. The cofactor is [4Fe-4S] cluster.

Its function is as follows. Involved in iron-sulfur cluster biogenesis. Binds a 4Fe-4S cluster, can transfer this cluster to apoproteins, and thereby intervenes in the maturation of Fe/S proteins. Could also act as a scaffold/chaperone for damaged Fe/S proteins. This is Fe/S biogenesis protein NfuA from Teredinibacter turnerae (strain ATCC 39867 / T7901).